A 347-amino-acid chain; its full sequence is MSVAGLKKQFHKASQLFSEKISGAEGTKLDEEFLNMEKKIDITSKAVAEILSKATEYLQPNPAYRAKLGMLNTVSKLRGQVKATGYPQTEGLLGDCMLKYGKELGEDSAFGNSLVDVGEALKLMAEVKDSLDINVKQTFIDPLQLLQDKDLKEIGHHLRKLEGRRLDYDYKKRRVGKIPEEEIRQAVEKFEESKELAERSMFNFLENDVEQVSQLAVFVEAALDYHRQSTEILQELQSKLELRISLASKVPKREFMPKPVNMSSTDANGVGPSSSSKTPGTDTPADQPCCRGLYDFEPENEGELGFKEGDIITLTNQIDENWYEGMLRGESGFFPINYVEVIVPLPP.

Positions 1 to 21 (MSVAGLKKQFHKASQLFSEKI) are membrane-binding amphipathic helix. One can recognise a BAR domain in the interval 18 to 249 (SEKISGAEGT…LELRISLASK (232 aa)). The segment at 60 to 87 (PNPAYRAKLGMLNTVSKLRGQVKATGYP) is required for dimerization upon membrane association. Residues 180-201 (EEEIRQAVEKFEESKELAERSM) are a coiled coil. Residues 218–254 (FVEAALDYHRQSTEILQELQSKLELRISLASKVPKRE) form an interaction with ARC region. Residues 255–288 (FMPKPVNMSSTDANGVGPSSSSKTPGTDTPADQP) are disordered. Residues 261–281 (NMSSTDANGVGPSSSSKTPGT) show a composition bias toward polar residues. In terms of domain architecture, SH3 spans 285–344 (ADQPCCRGLYDFEPENEGELGFKEGDIITLTNQIDENWYEGMLRGESGFFPINYVEVIVP).

This sequence belongs to the endophilin family. In terms of assembly, interacts with ARC, DNM1, SGIP1, SYNJ1 and DYDC1. Interacts with FASLG. Interacts with ATXN2. Interacts with BIN2.

It localises to the cytoplasm. The protein resides in the early endosome membrane. Functionally, implicated in endocytosis. May recruit other proteins to membranes with high curvature. In Mus musculus (Mouse), this protein is Endophilin-A3 (Sh3gl3).